Consider the following 353-residue polypeptide: MHLRHLFSSRLRGSLLLGSLLVVSSFSTQAAEEMLRKAVGKGAYEMAYSQQENALWLATSQSRKLDKGGVVYRLDPVTLEVTQAIHNDLKPFGATINNTTQTLWFGNTVNSAVTAIDAKTGEVKGRLVLDDRKRTEEVRPLQPRELVADDATNTVYISGIGKESVIWVVDGGNIKLKTAIQNTGKMSTGLALDSEGKRLYTTNADGELITIDTADNKILSRKKLLDDGKEHFFINISLDTARQRAFITDSKAAEVLVVDTRNGNILAKVAAPESLAVLFNPARNEAYVTHRQAGKVSVIDAKSYKVVKTFDTPTHPNSLALSADGKTLYVSVKQKSTKQQEATQPDDVIRIAL.

An N-terminal signal peptide occupies residues 1–30 (MHLRHLFSSRLRGSLLLGSLLVVSSFSTQA).

Monomer.

This is an uncharacterized protein from Escherichia coli (strain K12).